The chain runs to 506 residues: Glutamate--tRNA ligase (506 aa).

Residues 21–31 (PSPTGIPHVGM) carry the 'HIGH' region motif. Residues 265 to 269 (KLSKR) carry the 'KMSKS' region motif. Residue lysine 268 coordinates ATP.

The protein belongs to the class-I aminoacyl-tRNA synthetase family. Glutamate--tRNA ligase type 1 subfamily. Monomer.

The protein resides in the cytoplasm. It carries out the reaction tRNA(Glu) + L-glutamate + ATP = L-glutamyl-tRNA(Glu) + AMP + diphosphate. Its function is as follows. Catalyzes the attachment of glutamate to tRNA(Glu) in a two-step reaction: glutamate is first activated by ATP to form Glu-AMP and then transferred to the acceptor end of tRNA(Glu). This is Glutamate--tRNA ligase from Bifidobacterium adolescentis (strain ATCC 15703 / DSM 20083 / NCTC 11814 / E194a).